Consider the following 265-residue polypeptide: Thiazole synthase (265 aa).

The active-site Schiff-base intermediate with DXP is the Lys107. Residues Gly168, 194-195, and 216-217 contribute to the 1-deoxy-D-xylulose 5-phosphate site; these read AG and NT.

Belongs to the ThiG family. In terms of assembly, homotetramer. Forms heterodimers with either ThiH or ThiS.

The protein resides in the cytoplasm. The catalysed reaction is [ThiS sulfur-carrier protein]-C-terminal-Gly-aminoethanethioate + 2-iminoacetate + 1-deoxy-D-xylulose 5-phosphate = [ThiS sulfur-carrier protein]-C-terminal Gly-Gly + 2-[(2R,5Z)-2-carboxy-4-methylthiazol-5(2H)-ylidene]ethyl phosphate + 2 H2O + H(+). It functions in the pathway cofactor biosynthesis; thiamine diphosphate biosynthesis. In terms of biological role, catalyzes the rearrangement of 1-deoxy-D-xylulose 5-phosphate (DXP) to produce the thiazole phosphate moiety of thiamine. Sulfur is provided by the thiocarboxylate moiety of the carrier protein ThiS. In vitro, sulfur can be provided by H(2)S. The protein is Thiazole synthase of Pseudomonas aeruginosa (strain LESB58).